A 174-amino-acid polypeptide reads, in one-letter code: RNA pyrophosphohydrolase (174 aa).

The region spanning 6–149 is the Nudix hydrolase domain; sequence GYRPNVGIIL…KRDVYLGALK (144 aa). The Nudix box signature appears at 38 to 59; it reads GGIKPGESPETAMYRELYEEVG.

It belongs to the Nudix hydrolase family. RppH subfamily. It depends on a divalent metal cation as a cofactor.

Functionally, accelerates the degradation of transcripts by removing pyrophosphate from the 5'-end of triphosphorylated RNA, leading to a more labile monophosphorylated state that can stimulate subsequent ribonuclease cleavage. This is RNA pyrophosphohydrolase from Neisseria meningitidis serogroup C (strain 053442).